The chain runs to 301 residues: Phosphatidylserine decarboxylase proenzyme (301 aa).

Residues D117, H173, and S260 each act as charge relay system; for autoendoproteolytic cleavage activity in the active site. The active-site Schiff-base intermediate with substrate; via pyruvic acid; for decarboxylase activity is S260. S260 carries the pyruvic acid (Ser); by autocatalysis modification.

It belongs to the phosphatidylserine decarboxylase family. PSD-B subfamily. Prokaryotic type II sub-subfamily. Heterodimer of a large membrane-associated beta subunit and a small pyruvoyl-containing alpha subunit. It depends on pyruvate as a cofactor. Post-translationally, is synthesized initially as an inactive proenzyme. Formation of the active enzyme involves a self-maturation process in which the active site pyruvoyl group is generated from an internal serine residue via an autocatalytic post-translational modification. Two non-identical subunits are generated from the proenzyme in this reaction, and the pyruvate is formed at the N-terminus of the alpha chain, which is derived from the carboxyl end of the proenzyme. The autoendoproteolytic cleavage occurs by a canonical serine protease mechanism, in which the side chain hydroxyl group of the serine supplies its oxygen atom to form the C-terminus of the beta chain, while the remainder of the serine residue undergoes an oxidative deamination to produce ammonia and the pyruvoyl prosthetic group on the alpha chain. During this reaction, the Ser that is part of the protease active site of the proenzyme becomes the pyruvoyl prosthetic group, which constitutes an essential element of the active site of the mature decarboxylase.

The protein resides in the cell membrane. The enzyme catalyses a 1,2-diacyl-sn-glycero-3-phospho-L-serine + H(+) = a 1,2-diacyl-sn-glycero-3-phosphoethanolamine + CO2. It participates in phospholipid metabolism; phosphatidylethanolamine biosynthesis; phosphatidylethanolamine from CDP-diacylglycerol: step 2/2. Functionally, catalyzes the formation of phosphatidylethanolamine (PtdEtn) from phosphatidylserine (PtdSer). In Chlamydia trachomatis serovar L2 (strain ATCC VR-902B / DSM 19102 / 434/Bu), this protein is Phosphatidylserine decarboxylase proenzyme.